The following is a 1374-amino-acid chain: Sterol 3-beta-glucosyltransferase (1374 aa).

The segment covering 1–14 (MRPLRDDAKRRADR) has biased composition (basic and acidic residues). 3 disordered regions span residues 1 to 60 (MRPL…RDGN), 83 to 190 (ARFD…PRAA), and 206 to 227 (TSAT…QPQS). Positions 16–28 (LSASMKPTSSNRP) are enriched in polar residues. Residues 29-41 (FSDRVPDRFKDGD) show a composition bias toward basic and acidic residues. Residues 101–112 (VEQTTGKASSRT) show a composition bias toward polar residues. Over residues 125–138 (KRSEPSKLVLEERG) the composition is skewed to basic and acidic residues. One can recognise a GRAM 1 domain in the interval 234 to 283 (MRLMKMFEFAKPEKVLVEYACSLLQSMLLQGYMYVTEGHICFYAYLPKKS). Residues 285 to 382 (VAIKSGYLSK…WVKALQQVIF (98 aa)) enclose the PH domain. A disordered region spans residues 458–538 (ATKEAQDQHD…SMTDTTESAS (81 aa)). 2 stretches are compositionally biased toward basic and acidic residues: residues 461 to 473 (EAQD…HQPE) and 490 to 499 (SDQRREDSPR). A compositionally biased stretch (polar residues) spans 503 to 538 (SSVGNENQGSADSFAEQGTGSSPIIQSMTDTTESAS). Positions 704–770 (DRFRAHFALP…KDIENVEKEK (67 aa)) constitute a GRAM 2 domain. UDP-alpha-D-glucose contacts are provided by serine 893, arginine 894, aspartate 896, alanine 1196, histidine 1198, histidine 1211, glycine 1215, threonine 1216, aspartate 1235, and glutamine 1236. Positions 1314 to 1325 (ASSTPFSPTPTA) are enriched in polar residues. Residues 1314 to 1338 (ASSTPFSPTPTAKASPDGGDDDLDD) are disordered.

It belongs to the glycosyltransferase 28 family.

It localises to the cytoplasm. Its subcellular location is the preautophagosomal structure membrane. The catalysed reaction is a sterol + UDP-alpha-D-glucose = a sterol 3-beta-D-glucoside + UDP + H(+). The enzyme catalyses ergosterol + UDP-alpha-D-glucose = ergosteryl 3-beta-D-glucoside + UDP + H(+). Sterol glycosyltransferase responsible for the glycosylation of ergosterol to form ergosterol-glucoside. This chain is Sterol 3-beta-glucosyltransferase, found in Penicillium rubens (strain ATCC 28089 / DSM 1075 / NRRL 1951 / Wisconsin 54-1255) (Penicillium chrysogenum).